The chain runs to 229 residues: uncharacterized protein (229 aa).

In terms of domain architecture, ABC transporter spans 2-229 (LTLNNISKSY…LDERGDISHA (228 aa)). 38–45 (GPSGSGKS) provides a ligand contact to ATP.

This sequence belongs to the ABC transporter superfamily.

This is an uncharacterized protein from Bacillus subtilis (strain 168).